A 315-amino-acid chain; its full sequence is Homoserine kinase (315 aa).

97–107 (PPARGLGSSAT) is a binding site for ATP.

It belongs to the GHMP kinase family. Homoserine kinase subfamily.

Its subcellular location is the cytoplasm. The enzyme catalyses L-homoserine + ATP = O-phospho-L-homoserine + ADP + H(+). Its pathway is amino-acid biosynthesis; L-threonine biosynthesis; L-threonine from L-aspartate: step 4/5. Its function is as follows. Catalyzes the ATP-dependent phosphorylation of L-homoserine to L-homoserine phosphate. The protein is Homoserine kinase of Prochlorococcus marinus (strain MIT 9301).